The following is a 307-amino-acid chain: MNVGRKLKTLMFLSGTLTIIAEGIITYLIVSIIGIPTIFTAIFLVILWLIQWLIAPYLVGRNTEEVGPGDPLYEIVRKIAMESKVPTPRVFISYEEYPNAFAFGNYITGKRVAVTKPLLDILNQDELEAVLAHEVGHIKHLDVEIGMALGLIPTIIGYVGNFLLFTGWTLLFFAGDEVELILGLAMLAIGGVLFVLTFLLQIFVLWFNRLRESFADFHSATLYKDKAPYLATALAKIQIYAQNIRTDPFTGIIITAPPIKLKENERDAEELVMKWLHEHISPFADILMTHPHPAKRVKMLYSILQGT.

A run of 2 helical transmembrane segments spans residues 7–27 (LKTLMFLSGTLTIIAEGIITY) and 38–60 (IFTAIFLVILWLIQWLIAPYLVG). Histidine 133 provides a ligand contact to Zn(2+). Glutamate 134 is a catalytic residue. Histidine 137 serves as a coordination point for Zn(2+). A run of 2 helical transmembrane segments spans residues 145 to 165 (IGMALGLIPTIIGYVGNFLLF) and 180 to 200 (LILGLAMLAIGGVLFVLTFLL). Zn(2+) is bound at residue glutamate 212.

This sequence belongs to the peptidase M48B family. Zn(2+) is required as a cofactor.

It is found in the cell membrane. The chain is Protease HtpX homolog 1 from Sulfolobus acidocaldarius (strain ATCC 33909 / DSM 639 / JCM 8929 / NBRC 15157 / NCIMB 11770).